The primary structure comprises 417 residues: Gamma-glutamyl phosphate reductase (417 aa).

The protein belongs to the gamma-glutamyl phosphate reductase family.

It localises to the cytoplasm. It catalyses the reaction L-glutamate 5-semialdehyde + phosphate + NADP(+) = L-glutamyl 5-phosphate + NADPH + H(+). The protein operates within amino-acid biosynthesis; L-proline biosynthesis; L-glutamate 5-semialdehyde from L-glutamate: step 2/2. Catalyzes the NADPH-dependent reduction of L-glutamate 5-phosphate into L-glutamate 5-semialdehyde and phosphate. The product spontaneously undergoes cyclization to form 1-pyrroline-5-carboxylate. The chain is Gamma-glutamyl phosphate reductase from Escherichia coli O81 (strain ED1a).